The primary structure comprises 832 residues: MSEIHVKTALSRLADKYLQNSKNPSVPYTIETIVSFFQEIIHSISPDTFQLDIDDILYKIYSKIPPEENNDALFSKLSNLVSRLKSQTVIHNKSQILYFLYLLSPISQSSRDVSSHLLDESISNPINIPSTEVESSNFGQTRYDQVPENPQITDWDEGLENESSISIAHDSSRLNRSTETSSVQHTLITEADLLSSISYVLQGISTEYVQFKNELALLSKRIPVQYLLQMRALSETGLLYQELKVFSNYDPSVSQSIDGDNVSKAFINDQSLALQSLKSVISKELTNFLALIASLDSQIRADASLEKPMVTIRRCIAWTQVAKLKLRILSSVVNDNMNQENKKRLIQVVSKYNVHGDPLIQELSDKILTEITGPLYEMIENWIYKGELVDPYQEFFVKEKNGSESHDHQGQGDVVWKGKYFLDKELIPSFLSEELVDKIFLIGKSLNFARYGCGDFDWAQEHYQKLVKKLSYRDPHSLETVVDKAYTESINHLVYLMEEVFHLTDHLKAIKKYLLLGQGDFVDLLMESLGNSLDQPANTLFRHNLTASLESAIRSSNASYEPEYVLKRLDARLLELSHGETGWDVFTLEYKVDSPINVIITPYCSRQYLKIFNFLWRLKRIEFALAHSWRRVNLGERNVFRNLDYTKFEWHFVSCHLAEMIHFVCQLQYYILFEVIEISWQELQLAMEKPNATLDTYIEAHEKYVTSITHKGLLGGGKSRNEDSFLHQLHDILKVILNFHDAIELLYNFSCSLSNRIRINVPISTDALAAQYTPIKNELSNFTEEFQVRLQKLLHGLASHKDPEMRFLSVRLNYNEFYVSHRRRHDKDVTSQ.

Residues 1 to 186 (MSEIHVKTAL…STETSSVQHT (186 aa)) are interaction with mzt1. Phosphothreonine is present on Thr286.

It belongs to the TUBGCP family. As to quaternary structure, part of the gamma-tubulin complex. Interacts directly with mzt1. Interacts with mto1. Interacts with mto2.

It localises to the cytoplasm. Its subcellular location is the cytoskeleton. The protein localises to the microtubule organizing center. The protein resides in the spindle pole body. Its function is as follows. Component of the gamma tubule complex that is required for the regulation of both interphase microtubules and mitotic bipolar spindles. The polypeptide is Spindle pole body component alp6 (alp6) (Schizosaccharomyces pombe (strain 972 / ATCC 24843) (Fission yeast)).